The chain runs to 143 residues: MAKKITGYIKLQVPAGKANPSPPIGPALGQRGVNIMDFCKAFNAQTGDFEVGTPLPTIITVYADRSFSFVTKTPPATYLIKKAINLKSGSKEPGKASAGKIKRSQLAQIAEVKMKDLNANDIESATRIIEGSARAMGLEVVEG.

Belongs to the universal ribosomal protein uL11 family. In terms of assembly, part of the ribosomal stalk of the 50S ribosomal subunit. Interacts with L10 and the large rRNA to form the base of the stalk. L10 forms an elongated spine to which L12 dimers bind in a sequential fashion forming a multimeric L10(L12)X complex. Post-translationally, one or more lysine residues are methylated.

In terms of biological role, forms part of the ribosomal stalk which helps the ribosome interact with GTP-bound translation factors. The protein is Large ribosomal subunit protein uL11 of Rhizorhabdus wittichii (strain DSM 6014 / CCUG 31198 / JCM 15750 / NBRC 105917 / EY 4224 / RW1) (Sphingomonas wittichii).